Here is a 272-residue protein sequence, read N- to C-terminus: MEAQGVAEGAGPGAASGVPHPAALAPAAAPTLAPASVAAAASQFTLLVMQPCAGQDEAAAPGGSVGAGKPVRYLCEGAGDGEEEAGEDEADLLDTSDPPGGGESAASLEDLEDEETHSGGEGSSGGARRRGSGGGSMSKTCTYEGCSETTSQVAKQRKPWMCKKHRNKMYKDKYKKKKSDQALNCGGTASTGSAGNVKLEESADNILSIVKQRTGSFGDRPARPTLLEQVLNQKRLSLLRSPEVVQFLQKQQQLLNQQVLEQRQQQFPGTSM.

Disordered regions lie at residues 1-20, 74-142, and 175-195; these read MEAQ…GVPH, LCEG…KTCT, and KKKK…GSAG. The span at 79 to 94 shows a compositional bias: acidic residues; sequence GDGEEEAGEDEADLLD. The Nuclear localization signal signature appears at 163-178; the sequence is KKHRNKMYKDKYKKKK. A Glycyl lysine isopeptide (Lys-Gly) (interchain with G-Cter in SUMO2) cross-link involves residue K198. The interval 214–270 is C-terminal domain; the sequence is TGSFGDRPARPTLLEQVLNQKRLSLLRSPEVVQFLQKQQQLLNQQVLEQRQQQFPGT.

As to quaternary structure, the RFX heterotetrameric complex consists of 2 molecules of RFX5 and one each of RFXAP and RFX-B/RFXANK; with each subunit representing a separate complementation group. RFX forms cooperative DNA binding complexes with X2BP and CBF/NF-Y. RFX associates with CIITA to form an active transcriptional complex. Phosphorylated. As to expression, ubiquitous.

Its subcellular location is the nucleus. Functionally, part of the RFX complex that binds to the X-box of MHC II promoters. This Homo sapiens (Human) protein is Regulatory factor X-associated protein (RFXAP).